Reading from the N-terminus, the 3072-residue chain is MCNFIKKGIRFNGDKYIFLFDIFIKKYLLNVFVANILWEEENNICFLNRLKNKRKKSILFLKEEYLRYLMILNKEEKNKKKRLKKIYECIKVFSIKEFRWLINKLEIIYFYFFCHLLLLCIFQNIFLLTYMSKEYFLKNIHDYMINILSNDIKFNTCIEFTHNDKYEQKCITMAYYDFLLNKKGKLKKRNKYYDIKNIEPLTGKDKNLYSYYNFSPFFPMSSSDIINVNTNDKISNILWNDKYIDTLNHVNMKKKDIPLNIHSNNILMNNYAYRKYVRSYMIKKRINDLILYNLKNIFEKINNIEKLTNINNFMNFKKEYEKVSKEVCNNNNNNYDPSDYMLILPNSSKDHALYNNINNDEYMYKKFCNFISQAREIKKQREKEKCHRDEKCDRGENYDRGEKYDRDEKYDKEEKGLKEDNYRDVNEWNSNKSERCNKIYPSDYKFFLSEDKKYDTPYYSNERVDFHNSDIYMNDMDEELYYSSYHNNHHNNDITYNSNVYKRMLNEVIHPSVESNDVKKGPLNNDNIKNKESNVYEINDIIYQLNGEKKMNTNMCEKRGNKIFDSNNFHNINERKKKILDENDMITIDNNIDKKENILFPYFHMEILKDNEMNITKYYKDKQYYGQYKYDENIYIYDLIVLDTSGYIYKVSTDGSYHWKRKIVDHIQDYSNIEEKDDERKVLKKRNKLNEKDMYESNNKYESNMYDMNTYESNKYDINTYDKNISDSTKAHQNIYVLKKNVYDMNYDSKRALKISPYHNYFNTSIINSINRDKLKHSKPLYKNNIKTNDDNKKLRENKTKNKRLVSNYLGNLFYINENNEVIPLNINIKDVVNNSPFKSPLFPNMVFIGSRESTIINLDYDTGHVLRKYDEASNELLDKPPKKKSRKNKSIKNVKDINDNMKLYKEGSQNVEELSFTEEENKKKSILEGEKIEVASLNNEENMNKGFVCEKDDKINNYDNDEDDLFYEQYEDNNDNDNNKNDNNKNDNNKNDNNKNDNNNNNNNNNNNSYYYYNINGNASDDILVHSKNELLNNTYINKTNIKDENSNNNESFLNKIDGMNNFKLLPKRNMKRNRKKNLLKRLMVSTNKLSMLLNRYHLINRSLERMRKDIKRGKNKRILKKRQLQISLIKWVIKAVDENTLKKKWITTWVDVGSIFMTDVHRKDTSFINSLIEIVGNKLILRPIEKDKMKSTTYQILKIMNNDTDEIQMYRNEDMKYEVINNVDDINNVDNINNANNMNNVNNINNMNNMNNMNNMNNMNNMNNINNMNNINNMNNINNINNINNMNNILNDRLKNRINNKDNSNIKSKIFIFSESISSVFAVKYKNLSNIFTLDIIAKPNIKLYSDYDNLNNFTYNPVHVKKERTLFLPFSKDISDLDGDKFSCSFEDNIIYGKRLIHRLNSISVNISSIEKDMKYLLSNIIYVYDKNKRIPISYIYDMKNLIYEYQKVKQEFLYHLPWDEGDQKYLSRTDDVLNNSIIDNIGKKGPIFICEYINKFMDLYFEENDICYDYCSMLNIWDKIFNNTVSDGDSLLLSNLYRVVHNAFKNNNKYNNNNIYFDNNINININSSSSSSSRSRRNIYNFDNYYNNRRDYNSFWEDRHNILMNRENFLINTSTDKVFSGGKNNELKEFTSIRYKRRRWYWRVFYTIMFIIFFPVLFIYRRIIKRRKGSSKGNKIGTSSNNKLIKKNRTFKDYEDDENNIMSEDEEDDLDMNYDLIFDDDRLKVKKIKRMRKNYNNNNNNNNNKNNNNISNNNSNSNSKSNRFLSKLSNIDLANIDLNLIKKSHGKKMDNFEQPTLVDILARHARDSTHNDGVSYYPFNENETYNMLSLNYAWGGNHKHMNVERTSEYNMGNISHQLNYNNIRNLGDNKISAYELDIYEKELFHLYRRRAASQDVLNKKSFVMKKRIRSSYKVGSSNKYHKKNYTDNEKDKKKYRSYKEKHINEKMFDKKEFLNFLTNFNKKFMKKNSLVDHLIKMNDKAEDNYDGYNSSGSRYNNINDDGVELCGTKRYTNNKNNSDYDNYNNNNNMKNKRYSNKKHNNDNIIINNNNNKYTDERKYRNKSIKEDVDYTNDYYNIQLNNNKINNNQTKNKIDTIRNISHEKLGNNKSSSARNLSLIQTSHIPYDAPLADFLENGRFLRTFENISLIGQGGFGSVYKVSHRLEPGSPTYAVKFIYLKVSSLDNVSSRRYFREIAANRDIYSKHVVRYYTWWCEEPQFLPMHLMPKEIQNLVKKNKDTFKKRLTKNKKYSNNCISDSSNNNNSSCYSASSYNSSINSNYRNMKLWIKKKEQSPDMKRYKEVLRKNNAPNLVFYSDNDGLTSKNKENPEKNHNPFLSDKNFSDSIYKKKKSHDYNSSSHKLKKRKNKKKKSKKKRKSKSKIKTNAQGIYEESENDEGRDHFQYKKGKEQFSKFIGKHNSMGFTQSFQEYDPFDNGYLSEEDRDLIVFADNEESNGNDQQMIRHDNMNNENVIIKHRNEDDKNGLDGDKNGLDGDKNGLDGDKNGLDGDKNGLDGDKNELDGDKNGLDGDKNGLDGDKNGLDGDKNELDDNTKKLDDNTKKLDDLLMKQKINSLTRNDIVNIENENPAPHATNNIKNKKVDLNGELTYYDYVGKNEVIPNSRTETNVESINTNGMFNNKFSVMKDEGGEYKKKENMTWGDTKRDGLYENGKHEKDGLGVNKCITNKYIENDDDDDDDDDNNNNNNNIDERKKDLKKKQKNAITKGNEDLLATNGTNNKEKRKKDDDINKNMEKIKSYKKKTPVPEFSIVLLLQMELCKGYTLRKWLDRSTRSDKPLHFTYSDKKMNHPLEFDLFKQLIKGLKDIHATCFIHRDLKPENIFVDPDTYTLKIGDLGLVRFIEEKKREKDFNNIDCYKDNIYTDINQNAITSQISIKGQIIGTPGYTAPEGGALCDEKADIYSAALILLELLCPRFTTIMERYKRLNDFRNYYTVPDYVKIHLNPWYILMLQMSKPNPADRPSAADVYSKIKVLLDPHLTDFAFSFNDIHNEHMNKPPQGTNNFERITDNKDKFVIQSVVDMKNKVENEEIPIEKGLNSNVENIKNENNGADK.

The Cytoplasmic portion of the chain corresponds to 1-106 (MCNFIKKGIR…EFRWLINKLE (106 aa)). Residues 107 to 127 (IIYFYFFCHLLLLCIFQNIFL) form a helical membrane-spanning segment. Topologically, residues 128–1643 (LTYMSKEYFL…FTSIRYKRRR (1516 aa)) are lumenal. The disordered stretch occupies residues 383 to 402 (KEKCHRDEKCDRGENYDRGE). A 10 X 7 AA tandem repeat of D-K-N-[GE]-L-D-[GD] region spans residues 576-610 (KKKILDENDMITIDNNIDKKENILFPYFHMEILKD). A disordered region spans residues 970 to 1010 (QYEDNNDNDNNKNDNNKNDNNKNDNNKNDNNNNNNNNNNNS). Residues 978 to 996 (DNNKNDNNKNDNNKNDNNK) show a composition bias toward basic and acidic residues. Residues 997–1009 (NDNNNNNNNNNNN) show a composition bias toward low complexity. Residues 1644 to 1664 (WYWRVFYTIMFIIFFPVLFIY) traverse the membrane as a helical segment. Residues 1665–3072 (RRIIKRRKGS…IKNENNGADK (1408 aa)) lie on the Cytoplasmic side of the membrane. Disordered stretches follow at residues 1737–1766 (KNYNNNNNNNNNKNNNNISNNNSNSNSKSN) and 1917–1937 (KVGSSNKYHKKNYTDNEKDKK). Residues 1738–1766 (NYNNNNNNNNNKNNNNISNNNSNSNSKSN) show a composition bias toward low complexity. Residues 1928 to 1937 (NYTDNEKDKK) are compositionally biased toward basic and acidic residues. ATP is bound by residues 2152-2160 (IGQGGFGSV) and Lys-2177. Disordered stretches follow at residues 2316–2402 (FYSD…EGRD), 2479–2558 (RNED…KKLD), and 2691–2749 (ENDD…DDDI). Over residues 2326–2335 (KNKENPEKNH) the composition is skewed to basic and acidic residues. Residues 2362 to 2384 (HKLKKRKNKKKKSKKKRKSKSKI) are compositionally biased toward basic residues. A run of 10 repeats spans residues 2483-2489 (DKNGLDG), 2490-2496 (DKNGLDG), 2497-2503 (DKNGLDG), 2504-2510 (DKNGLDG), 2511-2517 (DKNGLDG), 2518-2524 (DKNELDG), 2525-2531 (DKNGLDG), 2532-2538 (DKNGLDG), 2539-2545 (DKNGLDG), and 2546-2552 (DKNELDD). The 372-residue stretch at 2627-2998 (TNVESINTNG…KIKVLLDPHL (372 aa)) folds into the Protein kinase domain. Over residues 2692–2702 (NDDDDDDDDDN) the composition is skewed to acidic residues. Asp-2835 functions as the Proton acceptor in the catalytic mechanism. A Phosphothreonine modification is found at Thr-2902.

It belongs to the protein kinase superfamily. Ser/Thr protein kinase family. GCN2 subfamily. As to quaternary structure, may form oligomers in response to stress; oligomerization may result in catalytic activity. Interacts with BIP; the interaction is disrupted in response to stress. In terms of processing, auto-phosphorylated.

The protein localises to the endoplasmic reticulum membrane. The catalysed reaction is L-seryl-[protein] + ATP = O-phospho-L-seryl-[protein] + ADP + H(+). It carries out the reaction L-threonyl-[protein] + ATP = O-phospho-L-threonyl-[protein] + ADP + H(+). With respect to regulation, dissociation from BIP and oligomerization, may results autophosphorylation and kinase activity induction. Its function is as follows. During the asexual blood stage, phosphorylates translation factor eIF2alpha in late schizonts resulting in protein translation inhibition. Plays a role in trophozoite differentiation into schizonts. The sequence is that of Eukaryotic translation initiation factor 2-alpha kinase PK4 from Plasmodium falciparum (isolate 3D7).